A 149-amino-acid polypeptide reads, in one-letter code: Protein SprT-like (149 aa).

The region spanning 6-147 (LQALVEQISI…VCGRCRSKLK (142 aa)) is the SprT-like domain. A Zn(2+)-binding site is contributed by His-67. Glu-68 is a catalytic residue. Zn(2+) is bound at residue His-71.

The protein belongs to the SprT family. Zn(2+) serves as cofactor.

The protein localises to the cytoplasm. This Geobacillus kaustophilus (strain HTA426) protein is Protein SprT-like.